We begin with the raw amino-acid sequence, 270 residues long: 3-methyl-2-oxobutanoate hydroxymethyltransferase (270 aa).

Residues Asp-42 and Asp-86 each coordinate Mg(2+). Residues 42-43, Asp-86, and Lys-116 contribute to the 3-methyl-2-oxobutanoate site; that span reads DS. Glu-118 serves as a coordination point for Mg(2+). Glu-185 acts as the Proton acceptor in catalysis.

The protein belongs to the PanB family. As to quaternary structure, homodecamer; pentamer of dimers. Mg(2+) is required as a cofactor.

The protein localises to the cytoplasm. The catalysed reaction is 3-methyl-2-oxobutanoate + (6R)-5,10-methylene-5,6,7,8-tetrahydrofolate + H2O = 2-dehydropantoate + (6S)-5,6,7,8-tetrahydrofolate. Its pathway is cofactor biosynthesis; (R)-pantothenate biosynthesis; (R)-pantoate from 3-methyl-2-oxobutanoate: step 1/2. Functionally, catalyzes the reversible reaction in which hydroxymethyl group from 5,10-methylenetetrahydrofolate is transferred onto alpha-ketoisovalerate to form ketopantoate. This chain is 3-methyl-2-oxobutanoate hydroxymethyltransferase, found in Synechococcus sp. (strain CC9902).